Here is a 277-residue protein sequence, read N- to C-terminus: Small ribosomal subunit protein uS3 (277 aa).

The 69-residue stretch at 43–111 (IRELMSKGMD…QIQLNILEVK (69 aa)) folds into the KH type-2 domain. Residues 217 to 277 (AAQQAAAPSS…AEANNAEGGK (61 aa)) form a disordered region. Basic and acidic residues predominate over residues 245 to 258 (NDRNDRGGRRERDS). Low complexity predominate over residues 259–277 (AAAPQQNSAAEANNAEGGK).

This sequence belongs to the universal ribosomal protein uS3 family. In terms of assembly, part of the 30S ribosomal subunit. Forms a tight complex with proteins S10 and S14.

Binds the lower part of the 30S subunit head. Binds mRNA in the 70S ribosome, positioning it for translation. This is Small ribosomal subunit protein uS3 from Kocuria rhizophila (strain ATCC 9341 / DSM 348 / NBRC 103217 / DC2201).